Consider the following 532-residue polypeptide: MVLGVWITLWRLVRLLLLLCVLPWAEGGKVLVVPMDGSPWLSLREVVRDVHARGHQVLVLGPEVTMHIKGEDFFTLQTYATPYSKEEFDQLMQRNYQMIFKPQHSLKTLLETMENLKKFSMLCSRSCWELLHNKPLIKHLNESSFDVVLTDPLDLCGALLAKYLSVPSVFLLRFILCDLDFEGTQCPNPSSYIPRMLTMNSDHMSFLQRVKNMLYPLMMKYTCHISYDPYASLASELFQREVSLVDILSHASVWLFREDFVLDYPRPIMPNMVFIGGINCANRKPLSQEFEAYVNASGEHGIVVFSLGSMVSEIPEKKAMEIADALGKIPQTVLWRYTGSRPSNLAKNTYLVKWLPQNVLLGHPKTRAFITHSGSHGIYEGICNGVPMVMLPLFGDQMDNAKRIETRGAGVTLNVLEMTSDDLANALKTVINDKSYKENIMRLSSLHKDRPVEPLDLAVFWVEFVMRHKGAAPRPAAHDLTWYQYHSLDVIGFLLAIVLTVAFVTFKCCAFAWGKCFGKKGRVKKAHKSKVH.

Residues 1 to 27 (MVLGVWITLWRLVRLLLLLCVLPWAEG) form the signal peptide. N-linked (GlcNAc...) asparagine glycans are attached at residues Asn141 and Asn295. Residues 490-506 (VIGFLLAIVLTVAFVTF) form a helical membrane-spanning segment.

This sequence belongs to the UDP-glycosyltransferase family. In terms of assembly, homodimers. Homooligomer. Interacts with UGT1A1, UGT1A3, UGT1A6, UGT1A7, UGT1A8, UGT1A9 and UGT1A10 to form heterodimers.

The protein localises to the endoplasmic reticulum membrane. It catalyses the reaction glucuronate acceptor + UDP-alpha-D-glucuronate = acceptor beta-D-glucuronoside + UDP + H(+). It carries out the reaction calcidiol + UDP-alpha-D-glucuronate = calcidiol 25-O-(beta-D-glucuronide) + UDP + H(+). The catalysed reaction is calcidiol + UDP-alpha-D-glucuronate = calcidiol 3-O-(beta-D-glucuronide) + UDP + H(+). The enzyme catalyses calcitriol + UDP-alpha-D-glucuronate = calcitriol 25-O-(beta-D-glucuronide) + UDP + H(+). It catalyses the reaction (5Z,8Z,11Z,14Z)-eicosatetraenoate + UDP-alpha-D-glucuronate = O-[(5Z),(8Z),(11Z),(14Z)-eicosatetraenoyl]-beta-D-glucuronate + UDP. It carries out the reaction 15-hydroxy-(5Z,8Z,11Z,13E)-eicosatetraenoate + UDP-alpha-D-glucuronate = 15-O-(beta-D-glucuronosyl)-(5Z,8Z,11Z,14Z)-eicosatetraenoate + UDP + H(+). The catalysed reaction is 20-hydroxy-(5Z,8Z,11Z,14Z)-eicosatetraenoate + UDP-alpha-D-glucuronate = 20-O-(beta-D-glucuronosyl)-(5Z,8Z,11Z,14Z)-eicosatetraenoate + UDP + H(+). Functionally, UDP-glucuronosyltransferase (UGT) that catalyzes phase II biotransformation reactions in which lipophilic substrates are conjugated with glucuronic acid to increase the metabolite's water solubility, thereby facilitating excretion into either the urine or bile. Essential for the elimination and detoxification of drugs, xenobiotics and endogenous compounds. Involved in the glucuronidation of calcidiol, which is the major circulating form of vitamin D3 essential for the regulation of calcium and phosphate homeostasis. Also glucuronidates the biologically active form of vitamin D3, calcitriol, probably leading to its biliary transport and intestinal reabsorption. Involved in the glucuronidation of arachidonic acid (AA) and AA-derived eicosanoids including 15-HETE, 20-HETE and PGB1. The sequence is that of UDP-glucuronosyltransferase 1A4 (Ugt1a4) from Oryctolagus cuniculus (Rabbit).